Reading from the N-terminus, the 408-residue chain is Serine-rich antigen (408 aa).

2 consecutive repeat copies span residues 209–214 and 230–235. Positions 209-235 are 2 X 6 AA repeats of S-V-A-Q-S-E; the sequence is SVAQSEEHGSDSMSQSYNTCGSVAQSE.

The protein belongs to the mycobacterial PPE family.

The polypeptide is Serine-rich antigen (sra) (Mycobacterium leprae (strain TN)).